Reading from the N-terminus, the 428-residue chain is Serine--tRNA ligase (428 aa).

An L-serine-binding site is contributed by 235 to 237 (TAE). Residue 266–268 (RSE) participates in ATP binding. Glu289 is an L-serine binding site. 353–356 (EISS) lines the ATP pocket. Ser389 lines the L-serine pocket.

It belongs to the class-II aminoacyl-tRNA synthetase family. Type-1 seryl-tRNA synthetase subfamily. In terms of assembly, homodimer. The tRNA molecule binds across the dimer.

Its subcellular location is the cytoplasm. It carries out the reaction tRNA(Ser) + L-serine + ATP = L-seryl-tRNA(Ser) + AMP + diphosphate + H(+). The enzyme catalyses tRNA(Sec) + L-serine + ATP = L-seryl-tRNA(Sec) + AMP + diphosphate + H(+). Its pathway is aminoacyl-tRNA biosynthesis; selenocysteinyl-tRNA(Sec) biosynthesis; L-seryl-tRNA(Sec) from L-serine and tRNA(Sec): step 1/1. Catalyzes the attachment of serine to tRNA(Ser). Is also able to aminoacylate tRNA(Sec) with serine, to form the misacylated tRNA L-seryl-tRNA(Sec), which will be further converted into selenocysteinyl-tRNA(Sec). This Shewanella baltica (strain OS155 / ATCC BAA-1091) protein is Serine--tRNA ligase.